The sequence spans 66 residues: Antimicrobial peptide Eval967 (66 aa).

Positions 1–22 (MKFSALLPVFFLLLAVIDYCQA) are cleaved as a signal peptide. Leucine 36 bears the Leucine amide mark. A propeptide spanning residues 37-66 (GKRDVKTQKYVDIKRRDLDLDDMLSKLFED) is cleaved from the precursor.

It belongs to the non-disulfide-bridged peptide (NDBP) superfamily. Short antimicrobial peptide (group 4) family. As to expression, expressed by the venom gland.

It localises to the secreted. In terms of biological role, probable antimicrobial peptide. Has no inhibitory activity against herpes simplex virus type 1 (HSV-1). This is Antimicrobial peptide Eval967 from Euscorpiops validus (Scorpion).